Here is a 176-residue protein sequence, read N- to C-terminus: MSKVKKNDETLSEVLVDVNRVTKVVKGGRSFAFSAYVVVGDKAGRVGAGHGKAKEVNEARGKAKQAAKKRMMKVPLYQNRTIHHDVVGKSGAAKVILRRAKAGTGIIAGGSMRAIFDSLGVHDIVAKSIGSTNVYAMISATFDALNKLASPKSIAMRRDKKVNEISVKSADIQVNE.

An S5 DRBM domain is found at 11 to 74 (LSEVLVDVNR…QAAKKRMMKV (64 aa)).

The protein belongs to the universal ribosomal protein uS5 family. In terms of assembly, part of the 30S ribosomal subunit. Contacts proteins S4 and S8.

Functionally, with S4 and S12 plays an important role in translational accuracy. Its function is as follows. Located at the back of the 30S subunit body where it stabilizes the conformation of the head with respect to the body. This chain is Small ribosomal subunit protein uS5, found in Rickettsia africae (strain ESF-5).